Here is a 227-residue protein sequence, read N- to C-terminus: Cytochrome c oxidase subunit 2 (227 aa).

The Mitochondrial intermembrane portion of the chain corresponds to 1-14; that stretch reads MAYPFQLGLQDATS. Residues 15-45 traverse the membrane as a helical segment; that stretch reads PIMEELTNFHDHTLMIVFLISSLVLYIISLM. At 46–59 the chain is on the mitochondrial matrix side; sequence LTTKLTHTSTMDAQ. The chain crosses the membrane as a helical span at residues 60–87; it reads EVETIWTILPAVILILIALPSLRILYMM. Residues 88–227 are Mitochondrial intermembrane-facing; the sequence is DEINNPALTV…HFENWSASMI (140 aa). Positions 161, 196, 198, 200, 204, and 207 each coordinate Cu cation. Mg(2+) is bound at residue Glu-198.

It belongs to the cytochrome c oxidase subunit 2 family. In terms of assembly, component of the cytochrome c oxidase (complex IV, CIV), a multisubunit enzyme composed of 14 subunits. The complex is composed of a catalytic core of 3 subunits MT-CO1, MT-CO2 and MT-CO3, encoded in the mitochondrial DNA, and 11 supernumerary subunits COX4I, COX5A, COX5B, COX6A, COX6B, COX6C, COX7A, COX7B, COX7C, COX8 and NDUFA4, which are encoded in the nuclear genome. The complex exists as a monomer or a dimer and forms supercomplexes (SCs) in the inner mitochondrial membrane with NADH-ubiquinone oxidoreductase (complex I, CI) and ubiquinol-cytochrome c oxidoreductase (cytochrome b-c1 complex, complex III, CIII), resulting in different assemblies (supercomplex SCI(1)III(2)IV(1) and megacomplex MCI(2)III(2)IV(2)). Found in a complex with TMEM177, COA6, COX18, COX20, SCO1 and SCO2. Interacts with TMEM177 in a COX20-dependent manner. Interacts with COX20. Interacts with COX16. Cu cation is required as a cofactor.

It is found in the mitochondrion inner membrane. The enzyme catalyses 4 Fe(II)-[cytochrome c] + O2 + 8 H(+)(in) = 4 Fe(III)-[cytochrome c] + 2 H2O + 4 H(+)(out). In terms of biological role, component of the cytochrome c oxidase, the last enzyme in the mitochondrial electron transport chain which drives oxidative phosphorylation. The respiratory chain contains 3 multisubunit complexes succinate dehydrogenase (complex II, CII), ubiquinol-cytochrome c oxidoreductase (cytochrome b-c1 complex, complex III, CIII) and cytochrome c oxidase (complex IV, CIV), that cooperate to transfer electrons derived from NADH and succinate to molecular oxygen, creating an electrochemical gradient over the inner membrane that drives transmembrane transport and the ATP synthase. Cytochrome c oxidase is the component of the respiratory chain that catalyzes the reduction of oxygen to water. Electrons originating from reduced cytochrome c in the intermembrane space (IMS) are transferred via the dinuclear copper A center (CU(A)) of subunit 2 and heme A of subunit 1 to the active site in subunit 1, a binuclear center (BNC) formed by heme A3 and copper B (CU(B)). The BNC reduces molecular oxygen to 2 water molecules using 4 electrons from cytochrome c in the IMS and 4 protons from the mitochondrial matrix. In Berylmys bowersi (Bower's white-toothed rat), this protein is Cytochrome c oxidase subunit 2 (MT-CO2).